A 144-amino-acid chain; its full sequence is Large ribosomal subunit protein uL15 (144 aa).

Residues 1–56 (MELNNLKPAAGAKHAKRRVGRGIGSGLGKTAGRGHKGQKSRSGGFHKVGFEGGQMP) are disordered. Over residues 21-31 (RGIGSGLGKTA) the composition is skewed to gly residues.

This sequence belongs to the universal ribosomal protein uL15 family. As to quaternary structure, part of the 50S ribosomal subunit.

Functionally, binds to the 23S rRNA. This is Large ribosomal subunit protein uL15 from Burkholderia multivorans (strain ATCC 17616 / 249).